The sequence spans 580 residues: Tetratricopeptide repeat protein 39C (580 aa).

TPR repeat units lie at residues 312–345 (SLFM…AVDQ), 350–383 (HVCL…SRWS), and 482–515 (GLKH…ELCR).

Belongs to the TTC39 family.

This Mus musculus (Mouse) protein is Tetratricopeptide repeat protein 39C (Ttc39c).